Consider the following 494-residue polypeptide: Alpha-amylase B (494 aa).

The first 18 residues, 1–18 (MFLAKSIVCLALLAVANA), serve as a signal peptide directing secretion. At Gln-19 the chain carries Pyrrolidone carboxylic acid. Cysteines 46 and 102 form a disulfide. The Ca(2+) site is built by Asn-116, Arg-165, and Asp-174. The cysteines at positions 153 and 167 are disulfide-linked. Chloride is bound at residue Arg-202. The Nucleophile role is filled by Asp-204. His-208 contacts Ca(2+). The Proton donor role is filled by Glu-241. The chloride site is built by Asn-304 and Arg-343. Cystine bridges form between Cys-376-Cys-382 and Cys-448-Cys-460.

The protein belongs to the glycosyl hydrolase 13 family. In terms of assembly, monomer. The cofactor is Ca(2+). Chloride is required as a cofactor.

It carries out the reaction Endohydrolysis of (1-&gt;4)-alpha-D-glucosidic linkages in polysaccharides containing three or more (1-&gt;4)-alpha-linked D-glucose units.. The polypeptide is Alpha-amylase B (Amy-d) (Drosophila yakuba (Fruit fly)).